We begin with the raw amino-acid sequence, 311 residues long: Methionyl-tRNA formyltransferase (311 aa).

S110–P113 lines the (6S)-5,6,7,8-tetrahydrofolate pocket.

It belongs to the Fmt family.

The enzyme catalyses L-methionyl-tRNA(fMet) + (6R)-10-formyltetrahydrofolate = N-formyl-L-methionyl-tRNA(fMet) + (6S)-5,6,7,8-tetrahydrofolate + H(+). Its function is as follows. Attaches a formyl group to the free amino group of methionyl-tRNA(fMet). The formyl group appears to play a dual role in the initiator identity of N-formylmethionyl-tRNA by promoting its recognition by IF2 and preventing the misappropriation of this tRNA by the elongation apparatus. The polypeptide is Methionyl-tRNA formyltransferase (Streptococcus thermophilus (strain ATCC BAA-250 / LMG 18311)).